We begin with the raw amino-acid sequence, 352 residues long: Eukaryotic translation initiation factor 3 subunit H (352 aa).

The segment at 1–34 is disordered; sequence MASRKEGTGSTATSSSSTGGAVGKGKGKGGSGDS. S3 is modified (phosphoserine). A compositionally biased stretch (low complexity) spans 8–19; it reads TGSTATSSSSTG. Over residues 20–32 the composition is skewed to gly residues; the sequence is GAVGKGKGKGGSG. The region spanning 39–173 is the MPN domain; it reads VQIDGLVVLK…LKAYRLTPKL (135 aa). S183 bears the Phosphoserine mark. Residues 265–300 are disordered; sequence RNSSKQQQQKHQYQQRRQQENMQRQSRGEPPLPEED. The segment covering 270-289 has biased composition (low complexity); it reads QQQQKHQYQQRRQQENMQRQ. A Glycyl lysine isopeptide (Lys-Gly) (interchain with G-Cter in SUMO2) cross-link involves residue K303.

The protein belongs to the eIF-3 subunit H family. In terms of assembly, component of the eukaryotic translation initiation factor 3 (eIF-3) complex, which is composed of 13 subunits: EIF3A, EIF3B, EIF3C, EIF3D, EIF3E, EIF3F, EIF3G, EIF3H, EIF3I, EIF3J, EIF3K, EIF3L and EIF3M. The eIF-3 complex appears to include 3 stable modules: module A is composed of EIF3A, EIF3B, EIF3G and EIF3I; module B is composed of EIF3F, EIF3H, and EIF3M; and module C is composed of EIF3C, EIF3D, EIF3E, EIF3K and EIF3L. EIF3C of module C binds EIF3B of module A and EIF3H of module B, thereby linking the three modules. EIF3J is a labile subunit that binds to the eIF-3 complex via EIF3B. The eIF-3 complex interacts with RPS6KB1 under conditions of nutrient depletion. Mitogenic stimulation leads to binding and activation of a complex composed of MTOR and RPTOR, leading to phosphorylation and release of RPS6KB1 and binding of EIF4B to eIF-3. Interacts with RNF139; the interaction leads to protein translation inhibitions in a ubiquitination-dependent manner. Interacts with DHX33; the interaction is independent of RNA.

Its subcellular location is the cytoplasm. Its function is as follows. Component of the eukaryotic translation initiation factor 3 (eIF-3) complex, which is required for several steps in the initiation of protein synthesis. The eIF-3 complex associates with the 40S ribosome and facilitates the recruitment of eIF-1, eIF-1A, eIF-2:GTP:methionyl-tRNAi and eIF-5 to form the 43S pre-initiation complex (43S PIC). The eIF-3 complex stimulates mRNA recruitment to the 43S PIC and scanning of the mRNA for AUG recognition. The eIF-3 complex is also required for disassembly and recycling of post-termination ribosomal complexes and subsequently prevents premature joining of the 40S and 60S ribosomal subunits prior to initiation. The eIF-3 complex specifically targets and initiates translation of a subset of mRNAs involved in cell proliferation, including cell cycling, differentiation and apoptosis, and uses different modes of RNA stem-loop binding to exert either translational activation or repression. In Rattus norvegicus (Rat), this protein is Eukaryotic translation initiation factor 3 subunit H (Eif3h).